The following is a 157-amino-acid chain: Beta-defensin 125 (157 aa).

Positions 1–20 (MNILMLTFIICGLLTQVTKG) are cleaved as a signal peptide. Intrachain disulfides connect Cys-27-Cys-55, Cys-35-Cys-49, and Cys-39-Cys-56. The segment at 109–157 (GETMTPETNTPETTMPPPETTTPETTMPPSETATSETMPPPSQRALTHN) is disordered. 2 stretches are compositionally biased toward low complexity: residues 110 to 121 (ETMTPETNTPET) and 129 to 145 (TTPETTMPPSETATSET).

This sequence belongs to the beta-defensin family.

Its subcellular location is the secreted. Functionally, has antibacterial activity. This chain is Beta-defensin 125 (DEFB125), found in Pan troglodytes (Chimpanzee).